Reading from the N-terminus, the 1831-residue chain is Transmembrane protein 131 homolog (1831 aa).

Residues 1 to 29 form the signal peptide; that stretch reads MVPSIHKTSNRYRTIYFFLISLLITSTFA. At 30–1169 the chain is on the lumenal side; sequence DQQAWPLPEE…QALPRPPFEN (1140 aa). The tract at residues 118–294 is papD-L domain; that stretch reads EMDPPMMDFG…QSKQIATLVL (177 aa). The chain crosses the membrane as a helical span at residues 1170–1190; the sequence is IMYYSCVTALIFCLVCVLACA. Over 1191-1831 the chain is Cytoplasmic; the sequence is YLEGDRAIAV…TDNENDEKNN (641 aa). Over residues 1223 to 1234 the composition is skewed to low complexity; sequence STTTPVPTVPST. Disordered stretches follow at residues 1223-1252, 1325-1516, 1663-1759, and 1800-1831; these read STTT…RPST, GQQK…PTDD, QMKR…VSNP, and WSSS…EKNN. Positions 1338–1349 are enriched in acidic residues; it reads PEFDEVEEEELA. 2 stretches are compositionally biased toward low complexity: residues 1394–1407 and 1435–1448; these read PIIV…PPVQ and QVPP…TPKT. Residues 1455–1467 show a composition bias toward basic and acidic residues; sequence EPEKPIKPSEQKK. The segment covering 1480 to 1497 has biased composition (polar residues); the sequence is TPSKARTPSKTPSQSNRA. Low complexity predominate over residues 1500–1514; it reads PASSPAPIAPTSAPT. Composition is skewed to polar residues over residues 1669 to 1687, 1702 to 1733, and 1742 to 1758; these read SPSQ…SPQK, NQSS…NSIQ, and WGDN…TVSN. Positions 1808 to 1820 are enriched in low complexity; that stretch reads PPTQQPSTSQMPQ. Over residues 1822–1831 the composition is skewed to acidic residues; sequence TDNENDEKNN.

Belongs to the TMEM131 family. As to quaternary structure, may interact (via PapD-L domain) with collagen proteins (via C-terminus); the interaction is direct and is involved in assembly and secretion of collagen. In terms of tissue distribution, predominantly expressed in the intestine and hypodermis.

The protein localises to the membrane. Its subcellular location is the endoplasmic reticulum membrane. Functionally, collagen binding transmembrane protein involved in collagen secretion, probably by recruiting the ER-to-Golgi transport complex TRAPPIII. Required for normal development. The polypeptide is Transmembrane protein 131 homolog (Caenorhabditis elegans).